The following is a 130-amino-acid chain: Hydrogenase maturation factor HypA (130 aa).

Ni(2+) is bound at residue His-2. Zn(2+) is bound by residues Cys-74, Cys-77, Cys-90, and Cys-93.

This sequence belongs to the HypA/HybF family.

Functionally, involved in the maturation of [NiFe] hydrogenases. Required for nickel insertion into the metal center of the hydrogenase. In Desulfatibacillum aliphaticivorans, this protein is Hydrogenase maturation factor HypA.